The primary structure comprises 340 residues: Methionyl-tRNA formyltransferase (340 aa).

110–113 (SLLP) is a (6S)-5,6,7,8-tetrahydrofolate binding site.

Belongs to the Fmt family.

It catalyses the reaction L-methionyl-tRNA(fMet) + (6R)-10-formyltetrahydrofolate = N-formyl-L-methionyl-tRNA(fMet) + (6S)-5,6,7,8-tetrahydrofolate + H(+). In terms of biological role, attaches a formyl group to the free amino group of methionyl-tRNA(fMet). The formyl group appears to play a dual role in the initiator identity of N-formylmethionyl-tRNA by promoting its recognition by IF2 and preventing the misappropriation of this tRNA by the elongation apparatus. This Synechococcus sp. (strain WH7803) protein is Methionyl-tRNA formyltransferase.